A 437-amino-acid polypeptide reads, in one-letter code: Probable E3 ubiquitin-protein ligase TRIML2 (437 aa).

The segment at threonine 14 to isoleucine 55 adopts a B box-type zinc-finger fold. Cysteine 19, histidine 22, cysteine 41, and histidine 47 together coordinate Zn(2+). Residues isoleucine 55 to glutamate 200 are a coiled coil. Positions aspartate 231–proline 429 constitute a B30.2/SPRY domain.

The catalysed reaction is S-ubiquitinyl-[E2 ubiquitin-conjugating enzyme]-L-cysteine + [acceptor protein]-L-lysine = [E2 ubiquitin-conjugating enzyme]-L-cysteine + N(6)-ubiquitinyl-[acceptor protein]-L-lysine.. Its pathway is protein modification; protein ubiquitination. In Homo sapiens (Human), this protein is Probable E3 ubiquitin-protein ligase TRIML2.